The primary structure comprises 141 residues: VLSPADKTNVKAAWGKVGAHAGDYGAEALERMFLSFPTTKTYFPHFDLSHGSAZVKGHGKKVAKALTBAVZHLDDMPNALSALSBLHAHKLRVBPVBFKLLNHCLLVTLAABFPSZFTPAVHASVDKFLASVSTVLTSKYR.

The 141-residue stretch at 1-141 (VLSPADKTNV…VSTVLTSKYR (141 aa)) folds into the Globin domain. H58 is a binding site for O2. Heme b is bound at residue H87.

Belongs to the globin family. In terms of assembly, heterotetramer of two alpha chains and two beta chains. In terms of tissue distribution, red blood cells.

Functionally, involved in oxygen transport from the lung to the various peripheral tissues. This is Hemoglobin subunit alpha-3 from Gorilla gorilla gorilla (Western lowland gorilla).